The chain runs to 140 residues: Alpha-lactalbumin (140 aa).

The N-terminal stretch at 1–19 (MMSLLPLLLIGIVLPATQA) is a signal peptide. The 121-residue stretch at 20 to 140 (KDYGKCELNQ…CRENLDQWNC (121 aa)) folds into the C-type lysozyme domain. 4 disulfides stabilise this stretch: Cys-25–Cys-140, Cys-47–Cys-131, Cys-80–Cys-96, and Cys-92–Cys-110. Lys-98, Asp-101, Asp-103, Asp-106, and Asp-107 together coordinate Ca(2+).

In terms of assembly, lactose synthase (LS) is a heterodimer of a catalytic component, beta1,4-galactosyltransferase (beta4Gal-T1) and a regulatory component, alpha-lactalbumin (LA). Mammary gland specific. Secreted in milk.

The protein resides in the secreted. Its function is as follows. Regulatory subunit of lactose synthase, changes the substrate specificity of galactosyltransferase in the mammary gland making glucose a good acceptor substrate for this enzyme. This enables LS to synthesize lactose, the major carbohydrate component of milk. In other tissues, galactosyltransferase transfers galactose onto the N-acetylglucosamine of the oligosaccharide chains in glycoproteins. This chain is Alpha-lactalbumin (LALBA), found in Trichosurus vulpecula (Brush-tailed possum).